A 430-amino-acid chain; its full sequence is Probable carboxypeptidase AFLA_037450 (430 aa).

The N-terminal stretch at 1 to 16 (MKSIYSLVLCTALTAA) is a signal peptide. Residue Asn84 is glycosylated (N-linked (GlcNAc...) asparagine). Asp156 is a Zn(2+) binding site. Glu188 serves as the catalytic Proton acceptor. Glu189 is a binding site for Zn(2+). Residue Asn285 is glycosylated (N-linked (GlcNAc...) asparagine).

The protein belongs to the peptidase M20A family. Zn(2+) is required as a cofactor.

It is found in the secreted. This chain is Probable carboxypeptidase AFLA_037450, found in Aspergillus flavus (strain ATCC 200026 / FGSC A1120 / IAM 13836 / NRRL 3357 / JCM 12722 / SRRC 167).